The primary structure comprises 65 residues: Large ribosomal subunit protein bL35 (65 aa).

The protein belongs to the bacterial ribosomal protein bL35 family.

The chain is Large ribosomal subunit protein bL35 from Wolbachia sp. subsp. Brugia malayi (strain TRS).